A 34-amino-acid polypeptide reads, in one-letter code: Photosystem II reaction center protein Psb30 (34 aa).

The chain crosses the membrane as a helical span at residues 6–26 (VIGQLIATGAIMLAGPAVIVL).

It belongs to the Psb30/Ycf12 family. In terms of assembly, PSII is composed of 1 copy each of membrane proteins PsbA, PsbB, PsbC, PsbD, PsbE, PsbF, PsbH, PsbI, PsbJ, PsbK, PsbL, PsbM, PsbT, PsbX, PsbY, PsbZ, Psb30/Ycf12, peripheral proteins of the oxygen-evolving complex and a large number of cofactors. It forms dimeric complexes.

The protein localises to the plastid. Its subcellular location is the chloroplast thylakoid membrane. In terms of biological role, a core subunit of photosystem II (PSII), probably helps stabilize the reaction center. This Trieres chinensis (Marine centric diatom) protein is Photosystem II reaction center protein Psb30.